Here is a 75-residue protein sequence, read N- to C-terminus: MARYFRRRKFCRFTAEGVAEIDYKDIVTLKNYITESGKIVPSRITGTSAKYQRQLARAIKRARYLSLLPYTDLHQ.

This sequence belongs to the bacterial ribosomal protein bS18 family. Part of the 30S ribosomal subunit. Forms a tight heterodimer with protein bS6.

Its function is as follows. Binds as a heterodimer with protein bS6 to the central domain of the 16S rRNA, where it helps stabilize the platform of the 30S subunit. This is Small ribosomal subunit protein bS18 from Shewanella baltica (strain OS223).